The sequence spans 273 residues: Non-homologous end joining protein Ku (273 aa).

One can recognise a Ku domain in the interval 10–193 (AFGLVNVPVK…KVEIKPAELK (184 aa)). Residues 111–273 (FLEPDSKSSK…KANSNVPTPP (163 aa)) form a sufficient for interaction with LigD region.

The protein belongs to the prokaryotic Ku family. In terms of assembly, homodimer. Interacts with LigD.

In terms of biological role, with LigD forms a non-homologous end joining (NHEJ) DNA repair enzyme, which repairs dsDNA breaks with reduced fidelity. Binds linear dsDNA with 5'- and 3'- overhangs but not closed circular dsDNA nor ssDNA. Recruits and stimulates the ligase activity of LigD. This Mycobacterium tuberculosis (strain CDC 1551 / Oshkosh) protein is Non-homologous end joining protein Ku (mku).